A 417-amino-acid chain; its full sequence is Serine hydroxymethyltransferase (417 aa).

Residues L121 and G125–L127 each bind (6S)-5,6,7,8-tetrahydrofolate. N6-(pyridoxal phosphate)lysine is present on K229. S355 to F357 is a (6S)-5,6,7,8-tetrahydrofolate binding site.

It belongs to the SHMT family. In terms of assembly, homodimer. Requires pyridoxal 5'-phosphate as cofactor.

It localises to the cytoplasm. It carries out the reaction (6R)-5,10-methylene-5,6,7,8-tetrahydrofolate + glycine + H2O = (6S)-5,6,7,8-tetrahydrofolate + L-serine. It functions in the pathway one-carbon metabolism; tetrahydrofolate interconversion. The protein operates within amino-acid biosynthesis; glycine biosynthesis; glycine from L-serine: step 1/1. Catalyzes the reversible interconversion of serine and glycine with tetrahydrofolate (THF) serving as the one-carbon carrier. This reaction serves as the major source of one-carbon groups required for the biosynthesis of purines, thymidylate, methionine, and other important biomolecules. Also exhibits THF-independent aldolase activity toward beta-hydroxyamino acids, producing glycine and aldehydes, via a retro-aldol mechanism. The polypeptide is Serine hydroxymethyltransferase (Yersinia pestis bv. Antiqua (strain Antiqua)).